A 421-amino-acid polypeptide reads, in one-letter code: Medium-chain specific acyl-CoA dehydrogenase, mitochondrial (421 aa).

Residues 1 to 25 (MAAGFGRCCRVLRSISRFHWRSQHT) constitute a mitochondrion transit peptide. An N6-acetyllysine; alternate modification is found at Lys-69. Lys-69 bears the N6-succinyllysine; alternate mark. Residue 158 to 167 (YCVTEPGAGS) participates in FAD binding. Octanoyl-CoA is bound at residue Ser-167. N6-succinyllysine is present on Lys-179. Residue 191–193 (WIT) participates in FAD binding. Residues Lys-212, Lys-217, Lys-259, and Lys-271 each carry the N6-acetyllysine; alternate modification. N6-succinyllysine; alternate occurs at positions 212, 217, 259, and 271. An octanoyl-CoA-binding site is contributed by Asp-278. Lys-279 is modified (N6-acetyllysine). An octanoyl-CoA-binding site is contributed by Arg-281. Lys-301 bears the N6-acetyllysine mark. Residues 306–308 (RKT) and 316–317 (HQ) each bind FAD. Phosphothreonine is present on Thr-351. Residues 374 to 378 (QILGG) and 401 to 405 (EGTSQ) contribute to the FAD site. Glu-401 is an octanoyl-CoA binding site. Glu-401 serves as the catalytic Proton acceptor.

Belongs to the acyl-CoA dehydrogenase family. In terms of assembly, homotetramer. Interacts with the heterodimeric electron transfer flavoprotein ETF. Requires FAD as cofactor. Acetylated. Could occur at proximity of the cofactor-binding sites and reduce the catalytic activity. Could be deacetylated by SIRT3.

It localises to the mitochondrion matrix. It catalyses the reaction a medium-chain 2,3-saturated fatty acyl-CoA + oxidized [electron-transfer flavoprotein] + H(+) = a medium-chain (2E)-enoyl-CoA + reduced [electron-transfer flavoprotein]. It carries out the reaction pentanoyl-CoA + oxidized [electron-transfer flavoprotein] + H(+) = (2E)-pentenoyl-CoA + reduced [electron-transfer flavoprotein]. The enzyme catalyses hexanoyl-CoA + oxidized [electron-transfer flavoprotein] + H(+) = (2E)-hexenoyl-CoA + reduced [electron-transfer flavoprotein]. The catalysed reaction is octanoyl-CoA + oxidized [electron-transfer flavoprotein] + H(+) = (2E)-octenoyl-CoA + reduced [electron-transfer flavoprotein]. It catalyses the reaction decanoyl-CoA + oxidized [electron-transfer flavoprotein] + H(+) = (2E)-decenoyl-CoA + reduced [electron-transfer flavoprotein]. It carries out the reaction dodecanoyl-CoA + oxidized [electron-transfer flavoprotein] + H(+) = (2E)-dodecenoyl-CoA + reduced [electron-transfer flavoprotein]. The enzyme catalyses tetradecanoyl-CoA + oxidized [electron-transfer flavoprotein] + H(+) = (2E)-tetradecenoyl-CoA + reduced [electron-transfer flavoprotein]. The catalysed reaction is oxidized [electron-transfer flavoprotein] + hexadecanoyl-CoA + H(+) = (2E)-hexadecenoyl-CoA + reduced [electron-transfer flavoprotein]. It participates in lipid metabolism; mitochondrial fatty acid beta-oxidation. Medium-chain specific acyl-CoA dehydrogenase is one of the acyl-CoA dehydrogenases that catalyze the first step of mitochondrial fatty acid beta-oxidation, an aerobic process breaking down fatty acids into acetyl-CoA and allowing the production of energy from fats. The first step of fatty acid beta-oxidation consists in the removal of one hydrogen from C-2 and C-3 of the straight-chain fatty acyl-CoA thioester, resulting in the formation of trans-2-enoyl-CoA. Electron transfer flavoprotein (ETF) is the electron acceptor that transfers electrons to the main mitochondrial respiratory chain via ETF-ubiquinone oxidoreductase (ETF dehydrogenase). Among the different mitochondrial acyl-CoA dehydrogenases, medium-chain specific acyl-CoA dehydrogenase acts specifically on acyl-CoAs with saturated 6 to 12 carbons long primary chains. The polypeptide is Medium-chain specific acyl-CoA dehydrogenase, mitochondrial (Homo sapiens (Human)).